Consider the following 336-residue polypeptide: Dihydroorotate dehydrogenase (quinone) (336 aa).

FMN contacts are provided by residues Ala-62–Lys-66 and Thr-86. Position 66 (Lys-66) interacts with substrate. Residue Asn-111–Phe-115 coordinates substrate. The FMN site is built by Asn-139 and Asn-172. Asn-172 lines the substrate pocket. Catalysis depends on Ser-175, which acts as the Nucleophile. Asn-177 contacts substrate. Residues Lys-217 and Thr-245 each coordinate FMN. Asn-246–Thr-247 contributes to the substrate binding site. FMN contacts are provided by residues Gly-268, Gly-297, and Tyr-318–Ser-319.

This sequence belongs to the dihydroorotate dehydrogenase family. Type 2 subfamily. In terms of assembly, monomer. Requires FMN as cofactor.

The protein resides in the cell membrane. The enzyme catalyses (S)-dihydroorotate + a quinone = orotate + a quinol. It functions in the pathway pyrimidine metabolism; UMP biosynthesis via de novo pathway; orotate from (S)-dihydroorotate (quinone route): step 1/1. In terms of biological role, catalyzes the conversion of dihydroorotate to orotate with quinone as electron acceptor. The polypeptide is Dihydroorotate dehydrogenase (quinone) (Pectobacterium atrosepticum (strain SCRI 1043 / ATCC BAA-672) (Erwinia carotovora subsp. atroseptica)).